The following is a 322-amino-acid chain: Sideroflexin-1 (322 aa).

Ser2 is modified (N-acetylserine). Residues 2–102 (SGEVPPNINI…MSAQVPMNMT (101 aa)) lie on the Mitochondrial matrix side of the membrane. The chain crosses the membrane as a helical span at residues 103–120 (ITGCMMTFYRTTPAVLFW). The Mitochondrial intermembrane segment spans residues 121–146 (QWINQSFNAVVNYTNRSGDAPLTVNE). A helical transmembrane segment spans residues 147–167 (LGTAYVSATTGAVATALGLNA). Residues 168 to 174 (LTKHVSP) are Mitochondrial matrix-facing. Residues 175-195 (LIGRFVPFAAVAAANCINIPL) form a helical membrane-spanning segment. Topologically, residues 196 to 228 (MRQRELKVGIPVTDENGTRLGESTNAAKQAITQ) are mitochondrial intermembrane. The helical transmembrane segment at 229–249 (VVISRILMAAPGMAIPPFIMN) threads the bilayer. Residues 250 to 266 (TLEKKAFLKRFPWMSAP) are Mitochondrial matrix-facing. Residues 267 to 287 (IQVTLVGFCLVFATPLCCALF) traverse the membrane as a helical segment. The Mitochondrial intermembrane segment spans residues 288–322 (PQKSSMSVTSLEDDLQASIQKSHPELRRVYFNKGL).

It belongs to the sideroflexin family.

The protein localises to the mitochondrion inner membrane. It carries out the reaction L-serine(in) = L-serine(out). The catalysed reaction is L-alanine(in) = L-alanine(out). It catalyses the reaction L-cysteine(in) = L-cysteine(out). Its function is as follows. Amino acid transporter importing serine, an essential substrate of the mitochondrial branch of the one-carbon pathway, into mitochondria. Mitochondrial serine is then converted to glycine and formate, which exits to the cytosol where it is used to generate the charged folates that serve as one-carbon donors. May also transport other amino acids including alanine and cysteine. This chain is Sideroflexin-1 (Sfxn1), found in Rattus norvegicus (Rat).